Reading from the N-terminus, the 393-residue chain is Probable protein phosphatase 2C 68 (393 aa).

Residues 56-359 enclose the PPM-type phosphatase domain; that stretch reads DFSIAVVQAN…DDITVVVIFI (304 aa). Mn(2+) is bound by residues Asp87, Gly88, Asp291, and Asp350.

The protein belongs to the PP2C family. The cofactor is Mg(2+). Mn(2+) serves as cofactor.

It carries out the reaction O-phospho-L-seryl-[protein] + H2O = L-seryl-[protein] + phosphate. The enzyme catalyses O-phospho-L-threonyl-[protein] + H2O = L-threonyl-[protein] + phosphate. May dephosphorylate and repress plasma membrane H(+)-ATPases (PM H(+)-ATPases, e.g. AHA1 and AHA2), thus influencing negatively plant growth and fitness. In Arabidopsis thaliana (Mouse-ear cress), this protein is Probable protein phosphatase 2C 68.